Consider the following 192-residue polypeptide: ER membrane protein complex subunit 8/9 homolog (192 aa).

In terms of domain architecture, MPN spans 5-135; that stretch reads ISITTEALSK…LVSIDKVGSD (131 aa).

This sequence belongs to the EMC8/EMC9 family.

The protein is ER membrane protein complex subunit 8/9 homolog of Dictyostelium discoideum (Social amoeba).